The sequence spans 187 residues: CASP-like protein SELMODRAFT_416718 (187 aa).

A helical membrane pass occupies residues Met1–Asn21. Residues Arg22 to Asp100 are Extracellular-facing. A helical transmembrane segment spans residues Thr101–Leu119. Residues Gly120 to Val125 are Cytoplasmic-facing. A helical transmembrane segment spans residues Ile126–Leu145. The Extracellular portion of the chain corresponds to Asn146 to Ala155. Residues Trp156–Ile176 traverse the membrane as a helical segment. Residues Ser177–Lys187 are Cytoplasmic-facing.

Belongs to the Casparian strip membrane proteins (CASP) family. In terms of assembly, homodimer and heterodimers.

Its subcellular location is the cell membrane. The protein is CASP-like protein SELMODRAFT_416718 of Selaginella moellendorffii (Spikemoss).